Here is a 185-residue protein sequence, read N- to C-terminus: Large ribosomal subunit protein uL5 (185 aa).

Belongs to the universal ribosomal protein uL5 family. Part of the 50S ribosomal subunit; part of the 5S rRNA/L5/L18/L25 subcomplex. Contacts the 5S rRNA and the P site tRNA. Forms a bridge to the 30S subunit in the 70S ribosome.

Functionally, this is one of the proteins that bind and probably mediate the attachment of the 5S RNA into the large ribosomal subunit, where it forms part of the central protuberance. In the 70S ribosome it contacts protein S13 of the 30S subunit (bridge B1b), connecting the 2 subunits; this bridge is implicated in subunit movement. Contacts the P site tRNA; the 5S rRNA and some of its associated proteins might help stabilize positioning of ribosome-bound tRNAs. The polypeptide is Large ribosomal subunit protein uL5 (Chelativorans sp. (strain BNC1)).